A 255-amino-acid chain; its full sequence is Imidazole glycerol phosphate synthase subunit HisF (255 aa).

Catalysis depends on residues aspartate 13 and aspartate 132.

This sequence belongs to the HisA/HisF family. In terms of assembly, heterodimer of HisH and HisF.

It is found in the cytoplasm. It catalyses the reaction 5-[(5-phospho-1-deoxy-D-ribulos-1-ylimino)methylamino]-1-(5-phospho-beta-D-ribosyl)imidazole-4-carboxamide + L-glutamine = D-erythro-1-(imidazol-4-yl)glycerol 3-phosphate + 5-amino-1-(5-phospho-beta-D-ribosyl)imidazole-4-carboxamide + L-glutamate + H(+). It functions in the pathway amino-acid biosynthesis; L-histidine biosynthesis; L-histidine from 5-phospho-alpha-D-ribose 1-diphosphate: step 5/9. In terms of biological role, IGPS catalyzes the conversion of PRFAR and glutamine to IGP, AICAR and glutamate. The HisF subunit catalyzes the cyclization activity that produces IGP and AICAR from PRFAR using the ammonia provided by the HisH subunit. The polypeptide is Imidazole glycerol phosphate synthase subunit HisF (Leptospira biflexa serovar Patoc (strain Patoc 1 / ATCC 23582 / Paris)).